A 137-amino-acid chain; its full sequence is Glutamate mutase sigma subunit (137 aa).

A B12-binding domain is found at 3 to 137; it reads KKTIVLGVIG…ADLKEDLNIK (135 aa). Adenosylcob(III)alamin contacts are provided by residues 13–17, H16, 61–63, and 93–97; these read SDCHA, SSL, and NIVVG.

The protein belongs to the methylaspartate mutase GlmS subunit family. In terms of assembly, heterotetramer composed of 2 epsilon subunits (GlmE) and 2 sigma subunits (GlmS). GlmE exists as a homodimer and GlmS as a monomer. Adenosylcob(III)alamin is required as a cofactor.

It carries out the reaction (2S,3S)-3-methyl-L-aspartate = L-glutamate. It functions in the pathway amino-acid degradation; L-glutamate degradation via mesaconate pathway; acetate and pyruvate from L-glutamate: step 1/4. Its function is as follows. Catalyzes the carbon skeleton rearrangement of L-glutamate to L-threo-3-methylaspartate ((2S,3S)-3-methylaspartate). This chain is Glutamate mutase sigma subunit, found in Clostridium tetani (strain Massachusetts / E88).